Here is a 299-residue protein sequence, read N- to C-terminus: UDP-N-acetylenolpyruvoylglucosamine reductase (299 aa).

Residues 28–193 (IGGPVDLMVL…VSALMQLHKE (166 aa)) enclose the FAD-binding PCMH-type domain. The active site involves arginine 172. Residue serine 222 is the Proton donor of the active site. Glutamate 292 is a catalytic residue.

It belongs to the MurB family. It depends on FAD as a cofactor.

It is found in the cytoplasm. It catalyses the reaction UDP-N-acetyl-alpha-D-muramate + NADP(+) = UDP-N-acetyl-3-O-(1-carboxyvinyl)-alpha-D-glucosamine + NADPH + H(+). It participates in cell wall biogenesis; peptidoglycan biosynthesis. Cell wall formation. The chain is UDP-N-acetylenolpyruvoylglucosamine reductase from Syntrophomonas wolfei subsp. wolfei (strain DSM 2245B / Goettingen).